Consider the following 444-residue polypeptide: Methylenetetrahydrofolate--tRNA-(uracil-5-)-methyltransferase TrmFO (444 aa).

An FAD-binding site is contributed by 10-15 (GAGLAG).

It belongs to the MnmG family. TrmFO subfamily. Requires FAD as cofactor.

Its subcellular location is the cytoplasm. The catalysed reaction is uridine(54) in tRNA + (6R)-5,10-methylene-5,6,7,8-tetrahydrofolate + NADH + H(+) = 5-methyluridine(54) in tRNA + (6S)-5,6,7,8-tetrahydrofolate + NAD(+). It carries out the reaction uridine(54) in tRNA + (6R)-5,10-methylene-5,6,7,8-tetrahydrofolate + NADPH + H(+) = 5-methyluridine(54) in tRNA + (6S)-5,6,7,8-tetrahydrofolate + NADP(+). Functionally, catalyzes the folate-dependent formation of 5-methyl-uridine at position 54 (M-5-U54) in all tRNAs. This is Methylenetetrahydrofolate--tRNA-(uracil-5-)-methyltransferase TrmFO from Streptococcus equi subsp. equi (strain 4047).